The sequence spans 433 residues: GTPase Der (433 aa).

EngA-type G domains are found at residues Lys5 to Gly167 and Ile174 to Glu349. Residues Gly11–Ser18, Asp58–Phe62, Asn119–Asp122, Gly180–Ser187, Asp227–Ile231, and Ser292–Asp295 contribute to the GTP site. Residues Glu349–Ile429 form the KH-like domain.

Belongs to the TRAFAC class TrmE-Era-EngA-EngB-Septin-like GTPase superfamily. EngA (Der) GTPase family. Associates with the 50S ribosomal subunit.

In terms of biological role, GTPase that plays an essential role in the late steps of ribosome biogenesis. The polypeptide is GTPase Der (Borreliella burgdorferi (strain ATCC 35210 / DSM 4680 / CIP 102532 / B31) (Borrelia burgdorferi)).